The primary structure comprises 209 residues: Large ribosomal subunit protein bL25 (209 aa).

The disordered stretch occupies residues 190–209 (LKSEEAASEGAAEEEAKDGE). Over residues 200 to 209 (AAEEEAKDGE) the composition is skewed to acidic residues.

The protein belongs to the bacterial ribosomal protein bL25 family. CTC subfamily. Part of the 50S ribosomal subunit; part of the 5S rRNA/L5/L18/L25 subcomplex. Contacts the 5S rRNA. Binds to the 5S rRNA independently of L5 and L18.

Its function is as follows. This is one of the proteins that binds to the 5S RNA in the ribosome where it forms part of the central protuberance. The chain is Large ribosomal subunit protein bL25 from Brucella anthropi (strain ATCC 49188 / DSM 6882 / CCUG 24695 / JCM 21032 / LMG 3331 / NBRC 15819 / NCTC 12168 / Alc 37) (Ochrobactrum anthropi).